The following is a 432-amino-acid chain: Glutamyl-tRNA reductase (432 aa).

Substrate contacts are provided by residues Thr55–Arg58, Ser114, Glu119–Gln121, and Gln125. Cys56 serves as the catalytic Nucleophile. Residue Gly194–Ile199 participates in NADP(+) binding.

The protein belongs to the glutamyl-tRNA reductase family. In terms of assembly, homodimer.

The enzyme catalyses (S)-4-amino-5-oxopentanoate + tRNA(Glu) + NADP(+) = L-glutamyl-tRNA(Glu) + NADPH + H(+). Its pathway is porphyrin-containing compound metabolism; protoporphyrin-IX biosynthesis; 5-aminolevulinate from L-glutamyl-tRNA(Glu): step 1/2. In terms of biological role, catalyzes the NADPH-dependent reduction of glutamyl-tRNA(Glu) to glutamate 1-semialdehyde (GSA). The polypeptide is Glutamyl-tRNA reductase (Burkholderia ambifaria (strain MC40-6)).